Here is a 264-residue protein sequence, read N- to C-terminus: Glutamate racemase (264 aa).

Residues 12 to 13 and 44 to 45 each bind substrate; these read DS and YG. Cysteine 76 (proton donor/acceptor) is an active-site residue. A substrate-binding site is contributed by 77–78; it reads NT. The active-site Proton donor/acceptor is the cysteine 186. 187–188 provides a ligand contact to substrate; it reads TH.

Belongs to the aspartate/glutamate racemases family.

It carries out the reaction L-glutamate = D-glutamate. It participates in cell wall biogenesis; peptidoglycan biosynthesis. In terms of biological role, provides the (R)-glutamate required for cell wall biosynthesis. This Fusobacterium nucleatum subsp. nucleatum (strain ATCC 25586 / DSM 15643 / BCRC 10681 / CIP 101130 / JCM 8532 / KCTC 2640 / LMG 13131 / VPI 4355) protein is Glutamate racemase.